Here is a 126-residue protein sequence, read N- to C-terminus: Protein ApaG (126 aa).

One can recognise an ApaG domain in the interval 2–126 (SALDTSIRVE…FRLATPGLLH (125 aa)).

The sequence is that of Protein ApaG from Shewanella sp. (strain W3-18-1).